A 114-amino-acid chain; its full sequence is Large ribosomal subunit protein uL22 (114 aa).

The protein belongs to the universal ribosomal protein uL22 family. In terms of assembly, part of the 50S ribosomal subunit.

Functionally, this protein binds specifically to 23S rRNA; its binding is stimulated by other ribosomal proteins, e.g. L4, L17, and L20. It is important during the early stages of 50S assembly. It makes multiple contacts with different domains of the 23S rRNA in the assembled 50S subunit and ribosome. Its function is as follows. The globular domain of the protein is located near the polypeptide exit tunnel on the outside of the subunit, while an extended beta-hairpin is found that lines the wall of the exit tunnel in the center of the 70S ribosome. The protein is Large ribosomal subunit protein uL22 of Streptococcus suis (strain 98HAH33).